The sequence spans 285 residues: Bifunctional protein FolD (285 aa).

Residues 165–167, T192, and V233 each bind NADP(+); that span reads GRG.

This sequence belongs to the tetrahydrofolate dehydrogenase/cyclohydrolase family. As to quaternary structure, homodimer.

The catalysed reaction is (6R)-5,10-methylene-5,6,7,8-tetrahydrofolate + NADP(+) = (6R)-5,10-methenyltetrahydrofolate + NADPH. It carries out the reaction (6R)-5,10-methenyltetrahydrofolate + H2O = (6R)-10-formyltetrahydrofolate + H(+). The protein operates within one-carbon metabolism; tetrahydrofolate interconversion. Catalyzes the oxidation of 5,10-methylenetetrahydrofolate to 5,10-methenyltetrahydrofolate and then the hydrolysis of 5,10-methenyltetrahydrofolate to 10-formyltetrahydrofolate. This is Bifunctional protein FolD from Corynebacterium jeikeium (strain K411).